A 360-amino-acid chain; its full sequence is MIIYATAVQTINSFVRLESLKEVYGLIWIFVPIFSLVLGIITGVLVIVWLEREISAGIQQRIGPEYAGPLGILQALADGTKLLFKENLRPSRGNTPLFSIGPSIAVISILLSYSVIPFSNHLVLADLNIGIFLWIAISSIAPIGLLMSGYGSNNKYSFLGGLRAAAQSISYEIPLTLCVLSISLLSNSLSTVDIVEAQSKYGFWGWNLWRQPIGFIIFLISSLAECERLPFDLPEAEEELIAGYQTEYSGIKFGLFYVASYLNLLISSLFVTVLYLGGWNISIPYISILELFQRDQIFGTTIGIFITLAKTYLFLFISIATRWTLPRLRMDQLLNLGWKFLLPISLGNLLLTTSFQLFSL.

The next 9 helical transmembrane spans lie at 27–47, 98–118, 129–149, 165–185, 203–223, 248–268, 269–289, 297–317, and 340–360; these read IWIF…VLVI, FSIG…VIPF, IGIF…LMSG, AAQS…ISLL, FWGW…ISSL, YSGI…LISS, LFVT…ISIL, IFGT…FLFI, and FLLP…LFSL.

This sequence belongs to the complex I subunit 1 family. NDH is composed of at least 16 different subunits, 5 of which are encoded in the nucleus.

Its subcellular location is the plastid. It localises to the chloroplast thylakoid membrane. The enzyme catalyses a plastoquinone + NADH + (n+1) H(+)(in) = a plastoquinol + NAD(+) + n H(+)(out). It catalyses the reaction a plastoquinone + NADPH + (n+1) H(+)(in) = a plastoquinol + NADP(+) + n H(+)(out). NDH shuttles electrons from NAD(P)H:plastoquinone, via FMN and iron-sulfur (Fe-S) centers, to quinones in the photosynthetic chain and possibly in a chloroplast respiratory chain. The immediate electron acceptor for the enzyme in this species is believed to be plastoquinone. Couples the redox reaction to proton translocation, and thus conserves the redox energy in a proton gradient. The chain is NAD(P)H-quinone oxidoreductase subunit 1, chloroplastic from Lepidium virginicum (Virginia pepperweed).